Reading from the N-terminus, the 497-residue chain is Serine hydroxymethyltransferase (497 aa).

(6S)-5,6,7,8-tetrahydrofolate contacts are provided by residues leucine 176 and glycine 180 to leucine 182. An N6-(pyridoxal phosphate)lysine modification is found at lysine 289.

This sequence belongs to the SHMT family. Homodimer. Pyridoxal 5'-phosphate is required as a cofactor.

The protein resides in the cytoplasm. It catalyses the reaction (6R)-5,10-methylene-5,6,7,8-tetrahydrofolate + glycine + H2O = (6S)-5,6,7,8-tetrahydrofolate + L-serine. The protein operates within one-carbon metabolism; tetrahydrofolate interconversion. Its pathway is amino-acid biosynthesis; glycine biosynthesis; glycine from L-serine: step 1/1. Catalyzes the reversible interconversion of serine and glycine with tetrahydrofolate (THF) serving as the one-carbon carrier. This reaction serves as the major source of one-carbon groups required for the biosynthesis of purines, thymidylate, methionine, and other important biomolecules. Also exhibits THF-independent aldolase activity toward beta-hydroxyamino acids, producing glycine and aldehydes, via a retro-aldol mechanism. In Chlamydia muridarum (strain MoPn / Nigg), this protein is Serine hydroxymethyltransferase.